A 607-amino-acid chain; its full sequence is Ceramide kinase (607 aa).

The DAGKc domain occupies 135–358 (DRPKSLMVFV…LDIAQVVRWK (224 aa)). ATP is bound by residues 145-149 (HPLCG), T176, and 205-211 (GDGLFNE). 204-207 (GGDG) lines the substrate pocket. D206 serves as the catalytic Proton donor/acceptor. The interval 247–297 (NDLSNSELTGDDANAISGSSNTPDDHEPLLSTTRSTGLDISSSDSSDEPCN) is disordered. The span at 276-286 (LSTTRSTGLDI) shows a compositional bias: polar residues. Position 320 (S320) interacts with ATP. The short motif at 454 to 461 (CRTNCLIC) is the CXXXCXXC element.

Requires Ca(2+) as cofactor. Mg(2+) serves as cofactor. Highly expressed in leaves and at lower levels in stems.

The catalysed reaction is an N-acylsphing-4-enine + ATP = an N-acylsphing-4-enine 1-phosphate + ADP + H(+). Its function is as follows. Catalyzes specifically the phosphorylation of ceramide to form ceramide 1-phosphate. Possesses activity on ceramide analog (C6 synthetic ceramide) in vitro. Ceramide is a critical sphingolipid metabolite that induces programmed cell death (PCD) in plants and ceramide-1-phosphate has a PCD suppressive effect. Thus, ceramide phosphorylation plays a role in the modulation of PCD and CERK activity is crucial for the maintenance of cell viability. The chain is Ceramide kinase (CERK) from Oryza sativa subsp. japonica (Rice).